The following is a 305-amino-acid chain: Tyrosine recombinase XerC (305 aa).

The 92-residue stretch at 4-95 (TSIQELIDKW…AVKNFYRFLE (92 aa)) folds into the Core-binding (CB) domain. Positions 116-298 (LLPKALSEDD…SIKHLEAVYT (183 aa)) constitute a Tyr recombinase domain. Active-site residues include arginine 159, lysine 182, histidine 250, arginine 253, and histidine 276. The O-(3'-phospho-DNA)-tyrosine intermediate role is filled by tyrosine 285.

This sequence belongs to the 'phage' integrase family. XerC subfamily. In terms of assembly, forms a cyclic heterotetrameric complex composed of two molecules of XerC and two molecules of XerD.

The protein resides in the cytoplasm. Site-specific tyrosine recombinase, which acts by catalyzing the cutting and rejoining of the recombining DNA molecules. The XerC-XerD complex is essential to convert dimers of the bacterial chromosome into monomers to permit their segregation at cell division. It also contributes to the segregational stability of plasmids. In Rickettsia felis (strain ATCC VR-1525 / URRWXCal2) (Rickettsia azadi), this protein is Tyrosine recombinase XerC.